The sequence spans 306 residues: Beta-lactamase (306 aa).

The tat-type signal signal peptide spans 1–34 (MDRTTARPNRRAVLATGVGAALAATAAAAGPAHA). Ser-82 serves as the catalytic Acyl-ester intermediate. Position 250–252 (250–252 (KTG)) interacts with substrate.

It belongs to the class-A beta-lactamase family. Predicted to be exported by the Tat system. The position of the signal peptide cleavage has not been experimentally proven.

It carries out the reaction a beta-lactam + H2O = a substituted beta-amino acid. The chain is Beta-lactamase (blaF) from Streptomyces fradiae (Streptomyces roseoflavus).